The following is a 474-amino-acid chain: Methylenetetrahydrofolate--tRNA-(uracil-5-)-methyltransferase TrmFO (474 aa).

15-20 (GAGLAG) lines the FAD pocket. Positions 453–474 (PLLPTAPDTTGAAGEETTQAES) are disordered.

This sequence belongs to the MnmG family. TrmFO subfamily. FAD is required as a cofactor.

The protein localises to the cytoplasm. The enzyme catalyses uridine(54) in tRNA + (6R)-5,10-methylene-5,6,7,8-tetrahydrofolate + NADH + H(+) = 5-methyluridine(54) in tRNA + (6S)-5,6,7,8-tetrahydrofolate + NAD(+). It carries out the reaction uridine(54) in tRNA + (6R)-5,10-methylene-5,6,7,8-tetrahydrofolate + NADPH + H(+) = 5-methyluridine(54) in tRNA + (6S)-5,6,7,8-tetrahydrofolate + NADP(+). Its function is as follows. Catalyzes the folate-dependent formation of 5-methyl-uridine at position 54 (M-5-U54) in all tRNAs. The sequence is that of Methylenetetrahydrofolate--tRNA-(uracil-5-)-methyltransferase TrmFO from Nitratidesulfovibrio vulgaris (strain ATCC 29579 / DSM 644 / CCUG 34227 / NCIMB 8303 / VKM B-1760 / Hildenborough) (Desulfovibrio vulgaris).